Consider the following 332-residue polypeptide: GTP 3',8-cyclase (332 aa).

Residues 9–220 (RFARKVDYLR…DQVRERIAER (212 aa)) enclose the Radical SAM core domain. A GTP-binding site is contributed by arginine 18. [4Fe-4S] cluster contacts are provided by cysteine 25 and cysteine 29. Tyrosine 31 contributes to the S-adenosyl-L-methionine binding site. Residue cysteine 32 coordinates [4Fe-4S] cluster. Residue arginine 67 coordinates GTP. Glycine 71 is a binding site for S-adenosyl-L-methionine. Threonine 98 is a binding site for GTP. Serine 122 contacts S-adenosyl-L-methionine. Lysine 159 provides a ligand contact to GTP. Methionine 193 provides a ligand contact to S-adenosyl-L-methionine. [4Fe-4S] cluster-binding residues include cysteine 258 and cysteine 261. 263-265 (RVR) serves as a coordination point for GTP. A [4Fe-4S] cluster-binding site is contributed by cysteine 275.

It belongs to the radical SAM superfamily. MoaA family. In terms of assembly, monomer and homodimer. The cofactor is [4Fe-4S] cluster.

The catalysed reaction is GTP + AH2 + S-adenosyl-L-methionine = (8S)-3',8-cyclo-7,8-dihydroguanosine 5'-triphosphate + 5'-deoxyadenosine + L-methionine + A + H(+). It participates in cofactor biosynthesis; molybdopterin biosynthesis. Functionally, catalyzes the cyclization of GTP to (8S)-3',8-cyclo-7,8-dihydroguanosine 5'-triphosphate. This is GTP 3',8-cyclase from Pseudomonas syringae pv. syringae (strain B728a).